A 230-amino-acid chain; its full sequence is uncharacterized protein (230 aa).

Disordered stretches follow at residues 63–90 (TDCQ…KKTI) and 194–230 (KKLE…YKEH). Residues 194 to 217 (KKLEEREQMDKHPQDRDNKDKEVN) are compositionally biased toward basic and acidic residues.

This is an uncharacterized protein from Caenorhabditis elegans.